Here is an 801-residue protein sequence, read N- to C-terminus: Vacuolar transporter chaperone complex subunit 4 (801 aa).

Residues 1–692 (MPFSKAWRSA…MLKWTEHATR (692 aa)) lie on the Cytoplasmic side of the membrane. Residues Lys-215, Arg-286, Arg-288, Lys-312, Lys-325, and Arg-391 each contribute to the ATP site. Glu-441 is a binding site for Mn(2+). Lys-473 is a catalytic residue. A helical membrane pass occupies residues 693–713 (LGLVGLGVIQFGNSMTLPGDV). Topologically, residues 714–723 (TQLSSFWRAN) are vacuolar. Residues 724–744 (FHIVLGIALVLVALMTLMYAL) form a helical membrane-spanning segment. Topologically, residues 745–768 (MTFKARSRRVYARKKIRFDDSWGP) are cytoplasmic. Residues 769–789 (TVLTVFLAFGICVIAMMHILG) form a helical membrane-spanning segment. Residues 790-801 (RYGPMLTGDDNF) lie on the Vacuolar side of the membrane.

Belongs to the VTC4 family. As to quaternary structure, the VTC core complex is an integral membrane heterooligomer composed of at least the catalytic subunit vtc4 and the accessory subunits vtc1 and vtc2. vtc1 is a small membrane protein without hydrophilic domain. Vtc2 and vtc4 are related and have 2 hydrophilic domains that face the cytosol, an N-terminal SPX domain and the central core domain. The central core in vtc4 is the catalytic domain. It depends on Mn(2+) as a cofactor.

Its subcellular location is the acidocalcisome membrane. The enzyme catalyses [phosphate](n) + ATP = [phosphate](n+1) + ADP. With respect to regulation, activity of the enzyme is Mn(2+)-dependent and enhanced in the presence of pyrophosphate (PPi). Component of a polyphosphate synthase complex that utilizes ATP to synthesize and translocate polyphosphate to acidocalcisomes in epimastigotes, insect-stages of Trypanosoma brucei. Catalytic subunit of the vacuolar transporter chaperone (VTC) complex. The VTC complex acts as a vacuolar polyphosphate polymerase that catalyzes the synthesis of inorganic polyphosphate (polyP) via transfer of phosphate from ATP to a growing polyP chain, releasing ADP. VTC exposes its catalytic domain vtc4 to the cytosol, where the growing polyP chain winds through a tunnel-shaped pocket, integrating cytoplasmic polymer synthesis with polyP membrane translocation. The VTC complex carries 9 vacuolar transmembrane domains, which are likely to constitute the translocation channel into the organelle lumen. PolyP synthesis is tightly coupled to its transport into the vacuole lumen, in order to avoid otherwise toxic intermediates in the cytosol, and it depends on the proton gradient across the membrane, formed by V-ATPase. The VTC complex also plays a role in vacuolar membrane fusion. Essential for infection and parasite survival in the mammalian host. This Trypanosoma cruzi (strain CL Brener) protein is Vacuolar transporter chaperone complex subunit 4.